The chain runs to 310 residues: GMP synthase [glutamine-hydrolyzing] subunit B (310 aa).

In terms of domain architecture, GMPS ATP-PPase spans 2-185 (FDPKKFIDEA…LGLPDSIVYR (184 aa)). Position 29–35 (29–35 (SGGVDSS)) interacts with ATP.

In terms of assembly, heterodimer composed of a glutamine amidotransferase subunit (A) and a GMP-binding subunit (B).

The catalysed reaction is XMP + L-glutamine + ATP + H2O = GMP + L-glutamate + AMP + diphosphate + 2 H(+). Its pathway is purine metabolism; GMP biosynthesis; GMP from XMP (L-Gln route): step 1/1. Catalyzes the synthesis of GMP from XMP. The protein is GMP synthase [glutamine-hydrolyzing] subunit B (guaAB) of Methanocaldococcus jannaschii (strain ATCC 43067 / DSM 2661 / JAL-1 / JCM 10045 / NBRC 100440) (Methanococcus jannaschii).